Reading from the N-terminus, the 559-residue chain is T-complex protein 1 subunit gamma (559 aa).

A disulfide bridge links Cys-369 with Cys-375. The tract at residues 537–559 is disordered; it reads GGASVTDGNGQEIPETFGDARDG.

Belongs to the TCP-1 chaperonin family. In terms of assembly, heterooligomeric complex of about 850 to 900 kDa that forms two stacked rings, 12 to 16 nm in diameter.

It localises to the cytoplasm. Its function is as follows. Molecular chaperone; assists the folding of proteins upon ATP hydrolysis. Known to play a role, in vitro, in the folding of actin and tubulin. The sequence is that of T-complex protein 1 subunit gamma from Tetrahymena pyriformis.